Consider the following 93-residue polypeptide: MTEEHVVYIGKKPVMNYVLAVITQFHEGAKEVSIKARGRAISRAVDVAEIVRNRFLKDDVDVKEIKIGTEELPTADGRTTNTSTIEIVLARKA.

An N6-acetyllysine modification is found at Lys-11.

This sequence belongs to the histone-like Alba family. In terms of processing, acetylated. Acetylation at Lys-11 decreases DNA-binding affinity.

The protein resides in the cytoplasm. Its subcellular location is the chromosome. Functionally, binds double-stranded DNA tightly but without sequence specificity. Involved in DNA compaction. The sequence is that of DNA/RNA-binding protein Alba from Pyrococcus abyssi (strain GE5 / Orsay).